Here is a 336-residue protein sequence, read N- to C-terminus: Dihydroorotate dehydrogenase (quinone) (336 aa).

FMN-binding positions include 62-66 and threonine 86; that span reads AGLDK. Residue lysine 66 coordinates substrate. Residue 111–115 coordinates substrate; the sequence is NRMGF. FMN contacts are provided by asparagine 139 and asparagine 172. Asparagine 172 contributes to the substrate binding site. Residue serine 175 is the Nucleophile of the active site. Asparagine 177 is a binding site for substrate. The FMN site is built by lysine 217 and threonine 245. 246–247 provides a ligand contact to substrate; that stretch reads NT. Residues glycine 268, glycine 297, and 318–319 each bind FMN; that span reads YS.

This sequence belongs to the dihydroorotate dehydrogenase family. Type 2 subfamily. In terms of assembly, monomer. The cofactor is FMN.

It is found in the cell membrane. The enzyme catalyses (S)-dihydroorotate + a quinone = orotate + a quinol. It functions in the pathway pyrimidine metabolism; UMP biosynthesis via de novo pathway; orotate from (S)-dihydroorotate (quinone route): step 1/1. In terms of biological role, catalyzes the conversion of dihydroorotate to orotate with quinone as electron acceptor. The protein is Dihydroorotate dehydrogenase (quinone) of Vibrio atlanticus (strain LGP32) (Vibrio splendidus (strain Mel32)).